We begin with the raw amino-acid sequence, 829 residues long: Colorectal mutant cancer protein (829 aa).

Disordered regions lie at residues 114 to 139 (RSEL…TSVS), 282 to 320 (TRLQ…SSND), and 672 to 700 (EEQK…CADA). The span at 123 to 132 (EVNEDSRSMD) shows a compositional bias: basic and acidic residues. The span at 285–312 (QSVQATGPSSPGRLTSTNRPINPSTGEL) shows a compositional bias: polar residues. Residues 689–698 (SKDKPGKECA) are compositionally biased toward basic and acidic residues. The short motif at 766-782 (KRANSNLVAAYEKAKKK) is the Nuclear localization signal element. A PDZ-binding motif is present at residues 826 to 829 (ETSL). The residue at position 828 (Ser828) is a Phosphoserine.

It belongs to the MCC family. As to quaternary structure, interacts with SCRIB (via phosphorylated PDZ-binding motif), EZR, SNX27, NHERF1 and NHERF2. Interacts with CTNNB1; the interaction is enhanced upon Wnt stimulation. Interacts with MYH10. Interacts with CCAR2. As to expression, expressed in a variety of tissues.

It is found in the cell membrane. Its subcellular location is the cell projection. The protein resides in the lamellipodium. The protein localises to the nucleus. It localises to the cytoplasm. In terms of biological role, candidate for the putative colorectal tumor suppressor gene located at 5q21. Suppresses cell proliferation and the Wnt/b-catenin pathway in colorectal cancer cells. Inhibits DNA binding of b-catenin/TCF/LEF transcription factors. Involved in cell migration independently of RAC1, CDC42 and p21-activated kinase (PAK) activation. Represses the beta-catenin pathway (canonical Wnt signaling pathway) in a CCAR2-dependent manner by sequestering CCAR2 to the cytoplasm, thereby impairing its ability to inhibit SIRT1 which is involved in the deacetylation and negative regulation of beta-catenin (CTNB1) transcriptional activity. The chain is Colorectal mutant cancer protein (MCC) from Homo sapiens (Human).